Reading from the N-terminus, the 106-residue chain is MMNLLNTSLEENGSFLTALYVICEFVALYLLGRALQAFVQAADACCLFWYTWVVVPGAKGTAFVYKHTYGKKLNNPELEAVIVNEFPKNGWNNKNPANFQNGKLHT.

The Virion surface segment spans residues 1–11 (MMNLLNTSLEE). A helical membrane pass occupies residues 12-32 (NGSFLTALYVICEFVALYLLG). Residues 33 to 106 (RALQAFVQAA…ANFQNGKLHT (74 aa)) are Intravirion-facing.

It belongs to the gammacoronaviruses E protein family. Homooligomer. Interacts with the M membrane protein in the budding compartment of the host cell, which is located between endoplasmic reticulum and the Golgi complex. The cytoplasmic tails of both proteins are important for this function. Interacts with Nucleoprotein.

The protein localises to the host Golgi apparatus membrane. Plays a central role in virus morphogenesis and assembly. Acts as a viroporin and self-assembles in host membranes forming pentameric protein-lipid pores that allow ion transport. Also plays a role in the induction of apoptosis. This chain is Envelope small membrane protein, found in Gallus gallus (Chicken).